A 186-amino-acid chain; its full sequence is Threonylcarbamoyl-AMP synthase (186 aa).

The 184-residue stretch at 3–186 (ILSLSECVDR…IINGSLIRHG (184 aa)) folds into the YrdC-like domain.

It belongs to the SUA5 family. TsaC subfamily.

Its subcellular location is the cytoplasm. The enzyme catalyses L-threonine + hydrogencarbonate + ATP = L-threonylcarbamoyladenylate + diphosphate + H2O. Functionally, required for the formation of a threonylcarbamoyl group on adenosine at position 37 (t(6)A37) in tRNAs that read codons beginning with adenine. Catalyzes the conversion of L-threonine, HCO(3)(-)/CO(2) and ATP to give threonylcarbamoyl-AMP (TC-AMP) as the acyladenylate intermediate, with the release of diphosphate. This Buchnera aphidicola subsp. Baizongia pistaciae (strain Bp) protein is Threonylcarbamoyl-AMP synthase.